A 69-amino-acid polypeptide reads, in one-letter code: UPF0346 protein YuiB (69 aa).

It belongs to the UPF0346 family.

The chain is UPF0346 protein YuiB (yuiB) from Lactococcus lactis subsp. lactis (strain IL1403) (Streptococcus lactis).